Reading from the N-terminus, the 428-residue chain is GTPase Obg (428 aa).

The 158-residue stretch at Met1–Leu158 folds into the Obg domain. In terms of domain architecture, OBG-type G spans Ala159–Ser330. GTP contacts are provided by residues Gly165–Ser172, Phe190–Glu194, Asp212–Gly215, Asn282–Asp285, and Ser311–Leu313. The Mg(2+) site is built by Ser172 and Thr192. The 80-residue stretch at Glu349 to Glu428 folds into the OCT domain.

Belongs to the TRAFAC class OBG-HflX-like GTPase superfamily. OBG GTPase family. Monomer. Mg(2+) serves as cofactor.

The protein localises to the cytoplasm. Functionally, an essential GTPase which binds GTP, GDP and possibly (p)ppGpp with moderate affinity, with high nucleotide exchange rates and a fairly low GTP hydrolysis rate. Plays a role in control of the cell cycle, stress response, ribosome biogenesis and in those bacteria that undergo differentiation, in morphogenesis control. The protein is GTPase Obg of Fusobacterium nucleatum subsp. nucleatum (strain ATCC 25586 / DSM 15643 / BCRC 10681 / CIP 101130 / JCM 8532 / KCTC 2640 / LMG 13131 / VPI 4355).